We begin with the raw amino-acid sequence, 554 residues long: MEDIVNRLYAFDWRSLSLGSVPAPTPAPAPQSSVVHHLIAWWDQSKDSMQQYSVASVAIAGFTALVVSVALYRALFSQRQRHDPLNQGCQPLRMYPHKDRIFGLDFVYQNVTTFRRHKYLETLKNRYQTLGTTYGVRVFNRRGILTSDPENIKTILSTRFKDYSLGNRVPIMGPLLGRGIFVSDGQDWSHSRALLRPNFVKEQVADLQMIETHLAQLLKLIPSDGRTVVELQDLFLRFTLDSATDFLFGHSLHTLSRGTAKDQQFGQAFALALDDIALQFRLGPWRALRRPNKDALAAYEICRGYVEGFVADAMAYRHGKASSTGDKNTSDRSYFLKELAQATDDRDRIRDELLNILIAGRDTTASLLGSLFYVLARHPEVWQKLRSEAATQLQGAAPNYEQLRNLQYTRHCINETLRLYPPVPNNTKMAVCDTILPRGGGPKGDAPVFVPKGCTMIYTVYAMHRRTDLFGPDAEEFRPERWATQRFSWEFLPFNGGPRICLGQQYALTEAMYVLVRFAQTFQTIEAQDPAPWTEQLTLTLASNNGVKVRLKGA.

A helical transmembrane segment spans residues 52 to 72; that stretch reads YSVASVAIAGFTALVVSVALY. 4 N-linked (GlcNAc...) asparagine glycosylation sites follow: asparagine 110, asparagine 328, asparagine 414, and asparagine 425. Cysteine 501 contributes to the heme binding site.

Belongs to the cytochrome P450 family. Requires heme as cofactor.

Its subcellular location is the membrane. It participates in secondary metabolite biosynthesis. Its function is as follows. Cytochrome P450 monooxygenase; part of the him gene cluster that mediates the biosynthesis of himeic acid A, a ubiquitin-activating enzyme (E1) inhibitor. First, himA, together with the trans-enoyl reductase himH, catalyzes the formation of apolyketide chain, which is then condensed with leucine by the NRPS activity of himA. Dieckmann cyclization and release from himA gives a tetramic acid intermediate as the product of himA PKS-NRPS. HimG then catalyzes alpha-oxidation of the tetramic acid ring, with a subsequent rearrangement to yield apyrone intermediate. Two terminal methyl groups of polyketide and amide side chains are oxidized to carboxylic acids by himC cytochrome P450 monooxygenase to form himeic acid A. Himeic acid A is further converted to himeic acid B and C during culture growth. No gene responsible for pyrone to pyridone conversion was found in the him gene cluster and himeic acid A is non-enzymatically converted to himeic acid C by the incorporation of an ammonium nitrogen atom in a pH5 buffer, and to himeic acid B at a conversion ratio of 50% during incubation in MeOH for 5 days. In Aspergillus japonicus, this protein is Cytochrome P450 monooxygenase himC.